A 426-amino-acid polypeptide reads, in one-letter code: 3-phosphoshikimate 1-carboxyvinyltransferase (426 aa).

Positions 22, 23, and 27 each coordinate 3-phosphoshikimate. K22 contacts phosphoenolpyruvate. Residues G96 and R124 each contribute to the phosphoenolpyruvate site. 3-phosphoshikimate-binding residues include S170, S171, Q172, S198, D314, N337, and K341. Q172 provides a ligand contact to phosphoenolpyruvate. D314 serves as the catalytic Proton acceptor. Positions 345, 387, and 412 each coordinate phosphoenolpyruvate.

The protein belongs to the EPSP synthase family. As to quaternary structure, monomer.

It localises to the cytoplasm. The enzyme catalyses 3-phosphoshikimate + phosphoenolpyruvate = 5-O-(1-carboxyvinyl)-3-phosphoshikimate + phosphate. Its pathway is metabolic intermediate biosynthesis; chorismate biosynthesis; chorismate from D-erythrose 4-phosphate and phosphoenolpyruvate: step 6/7. Catalyzes the transfer of the enolpyruvyl moiety of phosphoenolpyruvate (PEP) to the 5-hydroxyl of shikimate-3-phosphate (S3P) to produce enolpyruvyl shikimate-3-phosphate and inorganic phosphate. This is 3-phosphoshikimate 1-carboxyvinyltransferase from Shewanella pealeana (strain ATCC 700345 / ANG-SQ1).